A 186-amino-acid chain; its full sequence is MAALDAIREALPEPARDIKLNLQAVLQPGTLTPAQRWGVAVATAAAARNERLLAAALADARAEVEPAVIEDALAAAAVMAMNNVYYRFRHMVGKASYAEKPARLRMNRLVKPAASKVDFELFALAVSAVNGCETCVRSHEQVVVAGGLSEDQVHEAVRIAAVLHAAAVSLELAGYAAVPSAAAAAG.

C132 serves as the catalytic Proton donor. C132 and C135 are joined by a disulfide. Catalysis depends on C135, which acts as the Cysteine sulfenic acid (-SOH) intermediate.

The protein belongs to the AhpD family.

The enzyme catalyses N(6)-[(R)-dihydrolipoyl]-L-lysyl-[lipoyl-carrier protein] + a hydroperoxide = N(6)-[(R)-lipoyl]-L-lysyl-[lipoyl-carrier protein] + an alcohol + H2O. In terms of biological role, antioxidant protein with alkyl hydroperoxidase activity. Required for the reduction of the AhpC active site cysteine residues and for the regeneration of the AhpC enzyme activity. The protein is Alkyl hydroperoxide reductase AhpD of Anaeromyxobacter dehalogenans (strain 2CP-1 / ATCC BAA-258).